Reading from the N-terminus, the 128-residue chain is RxLR effector protein SFI2 (128 aa).

Positions 1-22 (MRSAFYIFLVVAVLARCSVVAA) are cleaved as a signal peptide. Residues 52 to 71 (RLLRVAGREDDDATTDEEDR) carry the RxLR-dEER motif.

This sequence belongs to the RxLR effector family.

The protein localises to the secreted. Its subcellular location is the host nucleus. Functionally, effector that suppresses flg22-induced post-translational MAP kinase activation both tomato and Arabidopsis. The perception of highly conserved pathogen- or microbe-associated molecular patterns (PAMPs/MAMPs), such as flg22, triggers converging signaling pathways recruiting MAP kinase cascades and inducing transcriptional re-programming, yielding a generic antimicrobial response. In Phytophthora infestans (strain T30-4) (Potato late blight agent), this protein is RxLR effector protein SFI2.